The following is a 96-amino-acid chain: MTKSELIEILARKQSHLAYKDVELSVKTMLEHLSQALATGDRIEIRGFGSFSLHFRPPRVGRNPKTGETVSLPGKYVPHFKPGKELRERVNAVHEQ.

The tract at residues 59 to 78 (RVGRNPKTGETVSLPGKYVP) is disordered.

Belongs to the bacterial histone-like protein family. In terms of assembly, heterodimer of an alpha and a beta chain.

Functionally, this protein is one of the two subunits of integration host factor, a specific DNA-binding protein that functions in genetic recombination as well as in transcriptional and translational control. The chain is Integration host factor subunit beta from Thioalkalivibrio sulfidiphilus (strain HL-EbGR7).